Reading from the N-terminus, the 245-residue chain is Collagen triple helix repeat-containing protein 1 (245 aa).

A signal peptide spans 1 to 32 (MHPQGRAAPPQLLLGLFLVLLLLLQLSAPISA). A Collagen-like domain is found at 59–92 (QGPAGVPGRDGSPGANGIPGTPGIPGRDGFKGEK). The segment at 64–87 (VPGRDGSPGANGIPGTPGIPGRDG) is disordered. N188 carries N-linked (GlcNAc...) asparagine glycosylation.

In terms of processing, N-glycosylated.

It is found in the secreted. The protein resides in the extracellular space. The protein localises to the extracellular matrix. Its function is as follows. May act as a negative regulator of collagen matrix deposition. In Mus musculus (Mouse), this protein is Collagen triple helix repeat-containing protein 1 (Cthrc1).